A 35-amino-acid polypeptide reads, in one-letter code: Photosystem II reaction center protein T (35 aa).

Residues Ala-3–Phe-23 form a helical membrane-spanning segment.

This sequence belongs to the PsbT family. In terms of assembly, PSII is composed of 1 copy each of membrane proteins PsbA, PsbB, PsbC, PsbD, PsbE, PsbF, PsbH, PsbI, PsbJ, PsbK, PsbL, PsbM, PsbT, PsbY, PsbZ, Psb30/Ycf12, at least 3 peripheral proteins of the oxygen-evolving complex and a large number of cofactors. It forms dimeric complexes.

It localises to the plastid. The protein localises to the chloroplast thylakoid membrane. Found at the monomer-monomer interface of the photosystem II (PS II) dimer, plays a role in assembly and dimerization of PSII. PSII is a light-driven water plastoquinone oxidoreductase, using light energy to abstract electrons from H(2)O, generating a proton gradient subsequently used for ATP formation. The chain is Photosystem II reaction center protein T from Gossypium barbadense (Sea Island cotton).